The primary structure comprises 135 residues: MIIGIGNDTEAISRVGQIVARQTKFMDSILTPAEREQALERKGKHFHEFVAGRFSAKEAFSKATGYGIGEKVHWHDIEILNEPNGRPIMQVKNFRYKTYVAITHSGDFVNTVVIIERLTILERLSLKFFPKRGVL.

Mg(2+) contacts are provided by Asp8 and Glu58.

Belongs to the P-Pant transferase superfamily. AcpS family. It depends on Mg(2+) as a cofactor.

The protein localises to the cytoplasm. It carries out the reaction apo-[ACP] + CoA = holo-[ACP] + adenosine 3',5'-bisphosphate + H(+). In terms of biological role, transfers the 4'-phosphopantetheine moiety from coenzyme A to a Ser of acyl-carrier-protein. This is Holo-[acyl-carrier-protein] synthase from Leuconostoc citreum (strain KM20).